The primary structure comprises 291 residues: Elongation factor Ts (291 aa).

An involved in Mg(2+) ion dislocation from EF-Tu region spans residues 78–81 (TDFV).

The protein belongs to the EF-Ts family.

It is found in the cytoplasm. Functionally, associates with the EF-Tu.GDP complex and induces the exchange of GDP to GTP. It remains bound to the aminoacyl-tRNA.EF-Tu.GTP complex up to the GTP hydrolysis stage on the ribosome. The sequence is that of Elongation factor Ts from Ureaplasma parvum serovar 3 (strain ATCC 27815 / 27 / NCTC 11736).